The following is a 561-amino-acid chain: Lanosterol 14-alpha demethylase (561 aa).

Cysteine 501 provides a ligand contact to heme.

It belongs to the cytochrome P450 family. Heme is required as a cofactor.

Its subcellular location is the membrane. The enzyme catalyses a 14alpha-methyl steroid + 3 reduced [NADPH--hemoprotein reductase] + 3 O2 = a Delta(14) steroid + formate + 3 oxidized [NADPH--hemoprotein reductase] + 4 H2O + 4 H(+). It carries out the reaction a 14alpha-methyl steroid + reduced [NADPH--hemoprotein reductase] + O2 = a 14alpha-hydroxymethyl steroid + oxidized [NADPH--hemoprotein reductase] + H2O + H(+). The catalysed reaction is a 14alpha-hydroxymethyl steroid + reduced [NADPH--hemoprotein reductase] + O2 = a 14alpha-formyl steroid + oxidized [NADPH--hemoprotein reductase] + 2 H2O + H(+). It catalyses the reaction a 14alpha-formyl steroid + reduced [NADPH--hemoprotein reductase] + O2 = a Delta(14) steroid + formate + oxidized [NADPH--hemoprotein reductase] + H2O + 2 H(+). The enzyme catalyses lanosterol + 3 reduced [NADPH--hemoprotein reductase] + 3 O2 = 4,4-dimethyl-5alpha-cholesta-8,14,24-trien-3beta-ol + formate + 3 oxidized [NADPH--hemoprotein reductase] + 4 H2O + 4 H(+). It carries out the reaction lanosterol + reduced [NADPH--hemoprotein reductase] + O2 = 32-hydroxylanosterol + oxidized [NADPH--hemoprotein reductase] + H2O + H(+). The catalysed reaction is 32-hydroxylanosterol + reduced [NADPH--hemoprotein reductase] + O2 = 32-oxolanosterol + oxidized [NADPH--hemoprotein reductase] + 2 H2O + H(+). It catalyses the reaction 32-oxolanosterol + reduced [NADPH--hemoprotein reductase] + O2 = 4,4-dimethyl-5alpha-cholesta-8,14,24-trien-3beta-ol + formate + oxidized [NADPH--hemoprotein reductase] + H2O + 2 H(+). The enzyme catalyses eburicol + 3 reduced [NADPH--hemoprotein reductase] + 3 O2 = 14-demethyleburicol + formate + 3 oxidized [NADPH--hemoprotein reductase] + 4 H2O + 4 H(+). It carries out the reaction eburicol + reduced [NADPH--hemoprotein reductase] + O2 = 32-hydroxyeburicol + oxidized [NADPH--hemoprotein reductase] + H2O + H(+). The catalysed reaction is 32-hydroxyeburicol + reduced [NADPH--hemoprotein reductase] + O2 = 32-oxoeburicol + oxidized [NADPH--hemoprotein reductase] + 2 H2O + H(+). It catalyses the reaction 32-oxoeburicol + reduced [NADPH--hemoprotein reductase] + O2 = 14-demethyleburicol + formate + oxidized [NADPH--hemoprotein reductase] + H2O + 2 H(+). The protein operates within steroid biosynthesis; zymosterol biosynthesis; zymosterol from lanosterol: step 1/6. Sterol 14alpha-demethylase that plays a critical role in the third module of ergosterol biosynthesis pathway, being ergosterol the major sterol component in fungal membranes that participates in a variety of functions. The third module or late pathway involves the ergosterol synthesis itself through consecutive reactions that mainly occur in the endoplasmic reticulum (ER) membrane. In filamentous fungi, during the initial step of this module, lanosterol (lanosta-8,24-dien-3beta-ol) can be metabolized to eburicol. Sterol 14alpha-demethylase catalyzes the three-step oxidative removal of the 14alpha-methyl group (C-32) of both these sterols in the form of formate, and converts eburicol and lanosterol to 14-demethyleburicol (4,4,24-trimethylergosta-8,14,24(28)-trienol) and 4,4-dimethyl-5alpha-cholesta-8,14,24-trien-3beta-ol, respectively, which are further metabolized by other enzymes in the pathway to ergosterol. Can also use substrates not intrinsic to fungi, such as 24,25-dihydrolanosterol (DHL), producing 4,4-dimethyl-8,14-cholestadien-3-beta-ol, but at lower rates than the endogenous substrates. In Mycosarcoma maydis (Corn smut fungus), this protein is Lanosterol 14-alpha demethylase (ERG11).